Reading from the N-terminus, the 257-residue chain is Probable pectate lyase G (257 aa).

The signal sequence occupies residues M1–A24.

It belongs to the polysaccharide lyase 3 family. The cofactor is Ca(2+).

It is found in the secreted. It catalyses the reaction Eliminative cleavage of (1-&gt;4)-alpha-D-galacturonan to give oligosaccharides with 4-deoxy-alpha-D-galact-4-enuronosyl groups at their non-reducing ends.. Its function is as follows. Pectinolytic enzyme consist of four classes of enzymes: pectin lyase, polygalacturonase, pectin methylesterase and rhamnogalacturonase. Among pectinolytic enzymes, pectin lyase is the most important in depolymerization of pectin, since it cleaves internal glycosidic bonds of highly methylated pectins. Favors pectate, the anion, over pectin, the methyl ester. The polypeptide is Probable pectate lyase G (plyG) (Emericella nidulans (strain FGSC A4 / ATCC 38163 / CBS 112.46 / NRRL 194 / M139) (Aspergillus nidulans)).